A 223-amino-acid polypeptide reads, in one-letter code: ATP-dependent dethiobiotin synthetase BioD (223 aa).

Residue Thr-16 participates in Mg(2+) binding. Residue Lys-37 is part of the active site. Ser-41 is a binding site for substrate. 2 residues coordinate Mg(2+): Asp-50 and Glu-111. Residues Asp-50, 111 to 114 (EGAG), and 171 to 172 (NR) each bind ATP.

This sequence belongs to the dethiobiotin synthetase family. In terms of assembly, homodimer. It depends on Mg(2+) as a cofactor.

It localises to the cytoplasm. The catalysed reaction is (7R,8S)-7,8-diammoniononanoate + CO2 + ATP = (4R,5S)-dethiobiotin + ADP + phosphate + 3 H(+). It functions in the pathway cofactor biosynthesis; biotin biosynthesis; biotin from 7,8-diaminononanoate: step 1/2. Its function is as follows. Catalyzes a mechanistically unusual reaction, the ATP-dependent insertion of CO2 between the N7 and N8 nitrogen atoms of 7,8-diaminopelargonic acid (DAPA, also called 7,8-diammoniononanoate) to form a ureido ring. The chain is ATP-dependent dethiobiotin synthetase BioD from Anaeromyxobacter dehalogenans (strain 2CP-C).